The primary structure comprises 472 residues: MAGGVTGGGSATWSDRFEQGLHPAIERFNASIGFDITLLQEDLDGSIAHARMLADCGVIQVEEADQLVGGLEQVRQEAASGLFQPGLADEDVHFAVERRLIALLGPVGKKLHTGRSRNDQVGTDLRLWLRRRLDELEQHLLGFQRALLDQANLHSNTLIPGYTHLQRAQPLCLAHHLLAYVEMVERDRQRMADLRKRLNLSPLGAAALAGTPVPIDRRSTASALGFDGIYANSLDAVSDRDFTVEFSAAASLVMVHLSRLAEEVIFWASEECGFVRLTDRCATGSSLMPQKKNPDVPELVRGKCGRVFGHLQGLLTMIKGLPLAYNKDFQEDKEALFDVVATTSQCLEAMTILLQEGLSFRTERLEAAVAADYSNATDVADYLVAKQVPFREAYQLVGAVVKHCLQEGVLLRELTLERWQQFHPAIEADLFEALTPRNVVAARTSEGGTGFDRVNEQLAIWNQRFGLADQVF.

It belongs to the lyase 1 family. Argininosuccinate lyase subfamily.

The protein localises to the cytoplasm. It carries out the reaction 2-(N(omega)-L-arginino)succinate = fumarate + L-arginine. Its pathway is amino-acid biosynthesis; L-arginine biosynthesis; L-arginine from L-ornithine and carbamoyl phosphate: step 3/3. This chain is Argininosuccinate lyase, found in Synechococcus sp. (strain CC9311).